Consider the following 415-residue polypeptide: Ammonium transporter Rh type A (415 aa).

At 1–2 the chain is on the cytoplasmic side; it reads MR. The chain crosses the membrane as a helical span at residues 3–23; it reads FIFPTIAVLLEASMIVLFGFF. The Extracellular portion of the chain corresponds to 24-51; the sequence is VKYETEQNAIQQPNSTNSTKVDRSLELY. N-linked (GlcNAc...) asparagine glycosylation is found at asparagine 37 and asparagine 40. A helical membrane pass occupies residues 52-72; that stretch reads PLFQDVHVMIFVGFGFLMTFL. Topologically, residues 73–76 are cytoplasmic; sequence KKYG. Residues 77–97 form a helical membrane-spanning segment; that stretch reads FSSVGINLLIAALGLQWGTFV. Topologically, residues 98-115 are extracellular; it reads QGMVHRHGQTIYIGIKNM. Residues 116–136 form a helical membrane-spanning segment; the sequence is INADFSTATVLISFGAVLGKI. Over 137-142 the chain is Cytoplasmic; sequence SPTQML. A helical transmembrane segment spans residues 143–163; sequence IMTIIEITVFAGNEYVVGEIF. At 164-167 the chain is on the extracellular side; the sequence is QASD. A helical transmembrane segment spans residues 168–188; the sequence is IGASMTIHAFGAYFGLAVAGV. Over 189–208 the chain is Cytoplasmic; the sequence is LYRTGLRKGHEKEESEYHSD. A helical transmembrane segment spans residues 209–229; the sequence is LFAMIGTLFLWMFWPSFNSAI. Residues 230-236 lie on the Extracellular side of the membrane; it reads AETAEEQ. The helical transmembrane segment at 237 to 257 threads the bilayer; the sequence is YLAIINTYLSLVACVLTAYAM. Residues 258–268 are Cytoplasmic-facing; it reads SSLVGHRGKLD. Residues 269–287 form a helical membrane-spanning segment; sequence MVHIQNATLAGGVAVGTCA. Topologically, residues 288-290 are extracellular; it reads DMK. A helical membrane pass occupies residues 291 to 311; that stretch reads IHPYGSLIIGSIAGMVSVLGF. Topologically, residues 312–332 are cytoplasmic; it reads RFLTPCLTAKLRIHDTCGVHN. Residues 333–353 traverse the membrane as a helical segment; it reads LHGLPGVVGGLSSIVAILLGV. Residues 354-363 are Extracellular-facing; sequence STASSMTMQA. The chain crosses the membrane as a helical span at residues 364-384; the sequence is AALGSSIGSAIAGGLITGLIL. Over 385-415 the chain is Cytoplasmic; that stretch reads RFIVRGQPSKDNFFDDSVYWEVPKEKELDNV.

This sequence belongs to the ammonium transporter (TC 2.A.49) family. Rh subfamily. Homodimer. Heterotrimer; a RHCE monomer interacts with a RHAG homodimer. Component of the ankyrin-1 complex in the erythrocyte, composed of ANK1, RHCE, RHAG, SLC4A1, EPB42, GYPA, GYPB and AQP1. Interacts with GYPB (via the N-terminal); this interaction bridges the (RHAG)2(RHCE) heterotrimer with the SLC4A1 Band 3 I dimer complexed with GYPA. Glycosylated.

Its subcellular location is the membrane. The catalysed reaction is methylamine(out) = methylamine(in). It carries out the reaction NH4(+)(in) = NH4(+)(out). It catalyses the reaction CO2(out) = CO2(in). Component of the ankyrin-1 complex, a multiprotein complex involved in the stability and shape of the erythrocyte membrane. Heterotrimer with RHCE (RHAG)2(RHCE), that transports ammonium and its related derivative methylammonium, in both neutral and ionic forms, across the erythrocyte membrane. The transport of NH4(+) is electrogenic and masks the NH3 transport. Also, may act as a CO2 channel. Moreover in erythrocyte, regulates RHD membrane expression and is associated with rhesus blood group antigen expression. This Canis lupus familiaris (Dog) protein is Ammonium transporter Rh type A.